Reading from the N-terminus, the 56-residue chain is Small ribosomal subunit protein uS14 (56 aa).

4 residues coordinate Zn(2+): Cys21, Cys24, Cys39, and Cys42.

This sequence belongs to the universal ribosomal protein uS14 family. Zinc-binding uS14 subfamily. As to quaternary structure, part of the 30S ribosomal subunit. Requires Zn(2+) as cofactor.

Its function is as follows. Binds 16S rRNA, required for the assembly of 30S particles. This Methanospirillum hungatei JF-1 (strain ATCC 27890 / DSM 864 / NBRC 100397 / JF-1) protein is Small ribosomal subunit protein uS14.